A 426-amino-acid polypeptide reads, in one-letter code: Enolase (426 aa).

Gly-41 contributes to the phosphoenolpyruvate binding site. Ser-43 is a Mg(2+) binding site. Glu-165 is a binding site for phosphoenolpyruvate. (2R)-2-phosphoglycerate contacts are provided by Glu-165 and Glu-206. Catalysis depends on Glu-206, which acts as the Proton donor. Mg(2+) contacts are provided by Asp-243, Glu-286, and Asp-313. Asp-313, Lys-338, Arg-367, Ser-368, and Lys-389 together coordinate phosphoenolpyruvate. (2R)-2-phosphoglycerate contacts are provided by Lys-338, Arg-367, and Ser-368. The active-site Proton acceptor is Lys-338.

Belongs to the enolase family. Homodimer. Mg(2+) is required as a cofactor.

The protein resides in the cytoplasm. It localises to the secreted. The protein localises to the cell surface. The catalysed reaction is (2R)-2-phosphoglycerate = phosphoenolpyruvate + H2O. It participates in carbohydrate degradation; glycolysis; pyruvate from D-glyceraldehyde 3-phosphate: step 4/5. Catalyzes the reversible conversion of 2-phosphoglycerate (2-PG) into phosphoenolpyruvate (PEP). It is essential for the degradation of carbohydrates via glycolysis. This chain is Enolase, found in Chloroflexus aurantiacus (strain ATCC 29366 / DSM 635 / J-10-fl).